A 512-amino-acid chain; its full sequence is NAD(P)H-quinone oxidoreductase subunit 2 B, chloroplastic (512 aa).

Helical transmembrane passes span Phe-31–Thr-51, Ile-57–Phe-77, Ile-99–Ile-119, Met-124–Cys-144, Leu-149–Tyr-169, Tyr-183–Gly-203, Ile-229–Phe-249, Pro-261–Thr-281, Trp-295–Ile-315, Met-323–Asp-343, Tyr-354–Leu-374, Ala-395–Phe-415, Leu-418–Leu-438, and Met-484–Ile-504.

This sequence belongs to the complex I subunit 2 family. NDH is composed of at least 16 different subunits, 5 of which are encoded in the nucleus.

The protein resides in the plastid. It localises to the chloroplast thylakoid membrane. The enzyme catalyses a plastoquinone + NADH + (n+1) H(+)(in) = a plastoquinol + NAD(+) + n H(+)(out). The catalysed reaction is a plastoquinone + NADPH + (n+1) H(+)(in) = a plastoquinol + NADP(+) + n H(+)(out). Functionally, NDH shuttles electrons from NAD(P)H:plastoquinone, via FMN and iron-sulfur (Fe-S) centers, to quinones in the photosynthetic chain and possibly in a chloroplast respiratory chain. The immediate electron acceptor for the enzyme in this species is believed to be plastoquinone. Couples the redox reaction to proton translocation, and thus conserves the redox energy in a proton gradient. The polypeptide is NAD(P)H-quinone oxidoreductase subunit 2 B, chloroplastic (Arabidopsis thaliana (Mouse-ear cress)).